The primary structure comprises 89 residues: Aminoacyl carrier protein 2 (89 aa).

Residues 6 to 84 (INVQNRVLSV…AMERMILNQL (79 aa)) enclose the Carrier domain. Position 42 is an O-(pantetheine 4'-phosphoryl)serine (Ser42).

Post-translationally, 4'-phosphopantetheine is transferred from CoA to a specific serine of the apo-form of this carrier protein.

Functionally, aminoacyl carrier protein. Can be charged with L-glycine via the formation of a thioester bond between the amino acid and the 4'-phosphopantetheinyl prosthetic group, catalyzed by the bll6282 ligase. The chain is Aminoacyl carrier protein 2 from Bradyrhizobium diazoefficiens (strain JCM 10833 / BCRC 13528 / IAM 13628 / NBRC 14792 / USDA 110).